We begin with the raw amino-acid sequence, 256 residues long: Small ribosomal subunit protein eS1 (256 aa).

Ala2 bears the N-acetylalanine; partial mark.

This sequence belongs to the eukaryotic ribosomal protein eS1 family. As to quaternary structure, component of the small ribosomal subunit. Mature ribosomes consist of a small (40S) and a large (60S) subunit. The 40S subunit contains about 33 different proteins and 1 molecule of RNA (18S). The 60S subunit contains about 49 different proteins and 3 molecules of RNA (25S, 5.8S and 5S).

It is found in the cytoplasm. The polypeptide is Small ribosomal subunit protein eS1 (Candida albicans (strain SC5314 / ATCC MYA-2876) (Yeast)).